Reading from the N-terminus, the 643-residue chain is 1-deoxy-D-xylulose-5-phosphate synthase (643 aa).

Thiamine diphosphate contacts are provided by residues His72 and 113–115 (GHA). Asp144 provides a ligand contact to Mg(2+). Residues 145–146 (GA), Asn174, Tyr287, and Glu370 each bind thiamine diphosphate. Residue Asn174 participates in Mg(2+) binding.

It belongs to the transketolase family. DXPS subfamily. Homodimer. Mg(2+) is required as a cofactor. Requires thiamine diphosphate as cofactor.

It catalyses the reaction D-glyceraldehyde 3-phosphate + pyruvate + H(+) = 1-deoxy-D-xylulose 5-phosphate + CO2. Its pathway is metabolic intermediate biosynthesis; 1-deoxy-D-xylulose 5-phosphate biosynthesis; 1-deoxy-D-xylulose 5-phosphate from D-glyceraldehyde 3-phosphate and pyruvate: step 1/1. Catalyzes the acyloin condensation reaction between C atoms 2 and 3 of pyruvate and glyceraldehyde 3-phosphate to yield 1-deoxy-D-xylulose-5-phosphate (DXP). This is 1-deoxy-D-xylulose-5-phosphate synthase from Synechococcus sp. (strain CC9605).